Reading from the N-terminus, the 195-residue chain is ATP-dependent Clp protease proteolytic subunit 3 (195 aa).

Residue S97 is the Nucleophile of the active site. The active site involves H122.

It belongs to the peptidase S14 family. In terms of assembly, fourteen ClpP subunits assemble into 2 heptameric rings which stack back to back to give a disk-like structure with a central cavity, resembling the structure of eukaryotic proteasomes.

The protein resides in the cytoplasm. It carries out the reaction Hydrolysis of proteins to small peptides in the presence of ATP and magnesium. alpha-casein is the usual test substrate. In the absence of ATP, only oligopeptides shorter than five residues are hydrolyzed (such as succinyl-Leu-Tyr-|-NHMec, and Leu-Tyr-Leu-|-Tyr-Trp, in which cleavage of the -Tyr-|-Leu- and -Tyr-|-Trp bonds also occurs).. In terms of biological role, cleaves peptides in various proteins in a process that requires ATP hydrolysis. Has a chymotrypsin-like activity. Plays a major role in the degradation of misfolded proteins. The polypeptide is ATP-dependent Clp protease proteolytic subunit 3 (Rhizobium meliloti (strain 1021) (Ensifer meliloti)).